We begin with the raw amino-acid sequence, 286 residues long: Ribose-phosphate pyrophosphokinase (286 aa).

Residues 34-36 and 91-93 contribute to the ATP site; these read DGE and RQH. 2 residues coordinate Mg(2+): histidine 124 and aspartate 161. Lysine 184 is an active-site residue. D-ribose 5-phosphate is bound by residues arginine 186, aspartate 210, and 214–218; that span reads STGGT.

The protein belongs to the ribose-phosphate pyrophosphokinase family. Class III (archaeal) subfamily. As to quaternary structure, homodimer. It depends on Mg(2+) as a cofactor.

The protein resides in the cytoplasm. The enzyme catalyses D-ribose 5-phosphate + ATP = 5-phospho-alpha-D-ribose 1-diphosphate + AMP + H(+). It functions in the pathway metabolic intermediate biosynthesis; 5-phospho-alpha-D-ribose 1-diphosphate biosynthesis; 5-phospho-alpha-D-ribose 1-diphosphate from D-ribose 5-phosphate (route I): step 1/1. Functionally, involved in the biosynthesis of the central metabolite phospho-alpha-D-ribosyl-1-pyrophosphate (PRPP) via the transfer of pyrophosphoryl group from ATP to 1-hydroxyl of ribose-5-phosphate (Rib-5-P). The polypeptide is Ribose-phosphate pyrophosphokinase (Thermoplasma volcanium (strain ATCC 51530 / DSM 4299 / JCM 9571 / NBRC 15438 / GSS1)).